The sequence spans 409 residues: Tryptophan synthase beta chain (409 aa).

Residue K95 is modified to N6-(pyridoxal phosphate)lysine.

Belongs to the TrpB family. As to quaternary structure, tetramer of two alpha and two beta chains. The cofactor is pyridoxal 5'-phosphate.

It catalyses the reaction (1S,2R)-1-C-(indol-3-yl)glycerol 3-phosphate + L-serine = D-glyceraldehyde 3-phosphate + L-tryptophan + H2O. It functions in the pathway amino-acid biosynthesis; L-tryptophan biosynthesis; L-tryptophan from chorismate: step 5/5. Functionally, the beta subunit is responsible for the synthesis of L-tryptophan from indole and L-serine. The protein is Tryptophan synthase beta chain of Pseudomonas syringae pv. tomato (strain ATCC BAA-871 / DC3000).